A 115-amino-acid polypeptide reads, in one-letter code: Non-specific lipid-transfer protein 3 (115 aa).

The first 23 residues, 1 to 23 (MAFALRFFTCLVLTVCIVASVDA), serve as a signal peptide directing secretion. 4 cysteine pairs are disulfide-bonded: Cys-27–Cys-74, Cys-37–Cys-51, Cys-52–Cys-97, and Cys-72–Cys-111.

Belongs to the plant LTP family.

Its function is as follows. Plant non-specific lipid-transfer proteins transfer phospholipids as well as galactolipids across membranes. May play a role in wax or cutin deposition in the cell walls of expanding epidermal cells and certain secretory tissues. The polypeptide is Non-specific lipid-transfer protein 3 (LTP3) (Arabidopsis thaliana (Mouse-ear cress)).